Consider the following 205-residue polypeptide: Metal-independent carbonic anhydrase (205 aa).

The signal sequence occupies residues 1–24; sequence MNLFKPRILVLFAATALISGIAIV. 2 residues coordinate hydrogencarbonate: threonine 106 and tyrosine 124.

Belongs to the iota-class carbonic anhydrase family. As to quaternary structure, homotetramer; dimer of dimers. It depends on Does not require a metal cofactor. as a cofactor.

The catalysed reaction is hydrogencarbonate + H(+) = CO2 + H2O. Activity is not affected by EDTA or 2,6-pyridinedicarboxylic acid (PDA). Activity is not affected by addition of most divalent metal ions, except zinc ions which decrease the activity. Inhibited by the iodide ion. In terms of biological role, catalyzes the hydration of carbon dioxide (CO2) to bicarbonate (HCO3(-)). Has only very low bicarbonate dehydration activity. May function even in metal-poor environments. In Nostoc sp. (strain PCC 7120 / SAG 25.82 / UTEX 2576), this protein is Metal-independent carbonic anhydrase.